A 399-amino-acid chain; its full sequence is Fe-coproporphyrin III synthase (399 aa).

Residues lysine 36–proline 253 form the Radical SAM core domain. [4Fe-4S] cluster-binding residues include cysteine 50, cysteine 54, and cysteine 57.

This sequence belongs to the radical SAM superfamily. [4Fe-4S] cluster serves as cofactor.

The catalysed reaction is 12,18-didecarboxysiroheme + 2 AH2 + 2 S-adenosyl-L-methionine = Fe-coproporphyrin III + 2 5'-deoxyadenosine + 2 L-methionine + 2 acetate + 2 A + 2 H(+). Its pathway is porphyrin-containing compound metabolism; protoheme biosynthesis. In terms of biological role, involved in siroheme-dependent heme b biosynthesis. Catalyzes the conversion of didecarboxysiroheme into Fe-coproporphyrin III by oxidative loss of two acetic acid side chains. The chain is Fe-coproporphyrin III synthase from Methanosarcina barkeri (strain Fusaro / DSM 804).